Reading from the N-terminus, the 90-residue chain is U7-theraphotoxin-Hhn1c (90 aa).

Positions Met1–Ser19 are cleaved as a signal peptide. Positions Phe20 to Glu50 are excised as a propeptide. Cystine bridges form between Cys51-Cys65, Cys58-Cys70, and Cys64-Cys81.

It belongs to the neurotoxin 10 (Hwtx-1) family. 13 (Hntx-13) subfamily. Expressed by the venom gland.

It is found in the secreted. In terms of biological role, ion channel inhibitor. In Cyriopagopus hainanus (Chinese bird spider), this protein is U7-theraphotoxin-Hhn1c.